A 174-amino-acid chain; its full sequence is Flavodoxin (174 aa).

Residues 4–165 (VGLFYGSDTG…RVEKWCKQIY (162 aa)) enclose the Flavodoxin-like domain.

This sequence belongs to the flavodoxin family. It depends on FMN as a cofactor.

Low-potential electron donor to a number of redox enzymes. The chain is Flavodoxin (fldA) from Haemophilus influenzae (strain ATCC 51907 / DSM 11121 / KW20 / Rd).